Here is a 358-residue protein sequence, read N- to C-terminus: 3'(2'),5'-bisphosphate nucleotidase 2 (358 aa).

Asp54 (proton acceptor) is an active-site residue. Mg(2+) contacts are provided by Glu77, Asp141, Ile143, and Asp144. The Proton acceptor role is filled by Thr146. Thr146, His243, Ser272, Lys275, Arg289, and Asp302 together coordinate adenosine 3',5'-bisphosphate. Positions 243, 272, 275, 289, and 302 each coordinate AMP. Asp302 contributes to the Mg(2+) binding site.

This sequence belongs to the inositol monophosphatase superfamily. Mg(2+) is required as a cofactor.

It carries out the reaction 3'-phosphoadenylyl sulfate + H2O = adenosine 5'-phosphosulfate + phosphate. The catalysed reaction is adenosine 3',5'-bisphosphate + H2O = AMP + phosphate. The enzyme catalyses adenosine 2',5'-bisphosphate + H2O = AMP + phosphate. Phosphatase that converts adenosine 3'-phosphate 5'-phosphosulfate (PAPS) to adenosine 5'-phosphosulfate (APS) and 3'(2')-phosphoadenosine 5'-phosphate (PAP) to AMP. Regulates the flux of sulfur in the sulfur-activation pathway by converting PAPS to APS. Involved in salt tolerance. The polypeptide is 3'(2'),5'-bisphosphate nucleotidase 2 (HAL22) (Candida albicans (strain SC5314 / ATCC MYA-2876) (Yeast)).